A 41-amino-acid polypeptide reads, in one-letter code: Photosystem I reaction center subunit IX (41 aa).

A helical membrane pass occupies residues 7 to 27; it reads YLSTVPVVFAIWLTFTAGLII.

This sequence belongs to the PsaJ family.

It localises to the plastid. The protein localises to the chloroplast thylakoid membrane. In terms of biological role, may help in the organization of the PsaE and PsaF subunits. This is Photosystem I reaction center subunit IX from Bigelowiella natans (Pedinomonas minutissima).